The following is a 56-amino-acid chain: Large ribosomal subunit protein bL32 (56 aa).

The span at 1–19 shows a compositional bias: basic residues; the sequence is MAVPKRKKSRSTTRHRRAQ. The segment at 1–22 is disordered; that stretch reads MAVPKRKKSRSTTRHRRAQWKT.

It belongs to the bacterial ribosomal protein bL32 family.

The polypeptide is Large ribosomal subunit protein bL32 (Cutibacterium acnes (strain DSM 16379 / KPA171202) (Propionibacterium acnes)).